Consider the following 173-residue polypeptide: Mesogenin-1 (173 aa).

A compositionally biased stretch (polar residues) spans 39–68 (ESYSLSQTPSPQSVSPAASYESTYSSSPHT). Disordered stretches follow at residues 39–69 (ESYSLSQTPSPQSVSPAASYESTYSSSPHTG) and 96–117 (TKKDHGHKTSMTTHRRRKASER). Residues 99–114 (DHGHKTSMTTHRRRKA) show a composition bias toward basic residues. One can recognise a bHLH domain in the interval 109–163 (HRRRKASEREKLRMRAIAEALHTLRNNLPPMYSQGRQPLTKIQTLKCTINYISEL).

It is found in the nucleus. Functionally, involved in specifying the paraxial, but not dorsal, mesoderm. May regulate the expression of T-box transcription factors required for mesoderm formation and differentiation, such as brachyury T, wnt8, vegt and eomes. The sequence is that of Mesogenin-1 (msgn1) from Xenopus laevis (African clawed frog).